The following is a 170-amino-acid chain: Transmembrane protein 217B (170 aa).

The signal sequence occupies residues Met1–Phe21. At Phe22 to Asn58 the chain is on the lumenal side. Residues Ile59 to His79 form a helical membrane-spanning segment. The Cytoplasmic portion of the chain corresponds to Lys80–Gly85. Residues Leu86–Leu106 form a helical membrane-spanning segment. Over Leu107 to Tyr120 the chain is Lumenal. The chain crosses the membrane as a helical span at residues Leu121–Val141. Topologically, residues Lys142–Ser170 are cytoplasmic.

The protein resides in the membrane. This Homo sapiens (Human) protein is Transmembrane protein 217B.